We begin with the raw amino-acid sequence, 938 residues long: Bifunctional glutamine synthetase adenylyltransferase/adenylyl-removing enzyme (938 aa).

The segment at 1–457 is adenylyl removase; sequence MLEADAARLK…HFDHVFGDPS (457 aa). Residues 460–938 form an adenylyl transferase region; it reads AHTLDSMWAA…ALWTIVFGSA (479 aa).

The protein belongs to the GlnE family. Mg(2+) is required as a cofactor.

The catalysed reaction is [glutamine synthetase]-O(4)-(5'-adenylyl)-L-tyrosine + phosphate = [glutamine synthetase]-L-tyrosine + ADP. It carries out the reaction [glutamine synthetase]-L-tyrosine + ATP = [glutamine synthetase]-O(4)-(5'-adenylyl)-L-tyrosine + diphosphate. Involved in the regulation of glutamine synthetase GlnA, a key enzyme in the process to assimilate ammonia. When cellular nitrogen levels are high, the C-terminal adenylyl transferase (AT) inactivates GlnA by covalent transfer of an adenylyl group from ATP to specific tyrosine residue of GlnA, thus reducing its activity. Conversely, when nitrogen levels are low, the N-terminal adenylyl removase (AR) activates GlnA by removing the adenylyl group by phosphorolysis, increasing its activity. The regulatory region of GlnE binds the signal transduction protein PII (GlnB) which indicates the nitrogen status of the cell. In Aromatoleum aromaticum (strain DSM 19018 / LMG 30748 / EbN1) (Azoarcus sp. (strain EbN1)), this protein is Bifunctional glutamine synthetase adenylyltransferase/adenylyl-removing enzyme.